Here is a 351-residue protein sequence, read N- to C-terminus: Dihydroorotate dehydrogenase (quinone) (351 aa).

Residues 61 to 65 and Thr85 each bind FMN; that span reads AGLDK. Residue Lys65 coordinates substrate. A substrate-binding site is contributed by 110–114; sequence NRMGF. FMN is bound by residues Asn139 and Asn172. Substrate is bound at residue Asn172. The Nucleophile role is filled by Ser175. Asn177 is a binding site for substrate. FMN-binding residues include Lys217 and Thr245. A substrate-binding site is contributed by 246–247; the sequence is NT. Residues Gly268, Gly297, and 318–319 contribute to the FMN site; that span reads YT.

This sequence belongs to the dihydroorotate dehydrogenase family. Type 2 subfamily. As to quaternary structure, monomer. Requires FMN as cofactor.

It is found in the cell membrane. The enzyme catalyses (S)-dihydroorotate + a quinone = orotate + a quinol. Its pathway is pyrimidine metabolism; UMP biosynthesis via de novo pathway; orotate from (S)-dihydroorotate (quinone route): step 1/1. Functionally, catalyzes the conversion of dihydroorotate to orotate with quinone as electron acceptor. This chain is Dihydroorotate dehydrogenase (quinone), found in Xylella fastidiosa (strain M12).